A 784-amino-acid chain; its full sequence is Ribosome biogenesis protein BOP1 homolog (784 aa).

The segment covering 1-11 (MTKKLALKRKG) has biased composition (basic residues). The disordered stretch occupies residues 1-159 (MTKKLALKRK…DSDTSDEEDI (159 aa)). Acidic residues-rich tracts occupy residues 27-36 (SENEEEEEDL), 45-54 (EDSTDDEGID), 62-73 (SEELQFESDEEG), and 84-111 (AEED…EDEE). Basic and acidic residues predominate over residues 112-123 (KDSKSKQADDKP). Low complexity predominate over residues 124 to 133 (SSSGAASKKA). The span at 138–148 (LSKRDTSKPEY) shows a compositional bias: basic and acidic residues. Acidic residues predominate over residues 149–158 (QDSDTSDEED). 7 WD repeats span residues 445 to 486 (GHTD…RTIE), 488 to 526 (DEVV…KVLV), 570 to 612 (THFK…SQIP), 615 to 653 (KSKG…LVKK), 656 to 695 (TNSK…KPYQ), 699 to 738 (LHRN…DLLQ), and 754 to 784 (RDEF…RLYT).

It belongs to the WD repeat BOP1/ERB1 family.

The protein resides in the nucleus. Its subcellular location is the nucleolus. The protein localises to the nucleoplasm. Functionally, required for maturation of ribosomal RNAs and formation of the large ribosomal subunit. In Drosophila yakuba (Fruit fly), this protein is Ribosome biogenesis protein BOP1 homolog.